We begin with the raw amino-acid sequence, 337 residues long: MVREKVRVSTRTLQWKCVESRADSKRLYYGRFILSPLMKGQADTIGIAMRRALLGEIEGTCITRAKFEKIPHEYSTIVGIQESVHEILMNLKEIVLRSNLYGTRNASICVKGPGCVTAQDIILPTSVEIVDNTQYIANLTEPINLCIGLQIERNRGYHIKTPKNFQDGSYPIDAVFMPVRNANHSIHSYGNGNEKQEILFLEIWTNGSLTPKEALHEASRNLIDLFIPFLHAEEENLHLENNQYKVTLPFFTFHDRLAKLRKTKKEIALKSIFIDQFELPPRTYNCLKRYNIHTLFDLLNKSQEDLMKMEYFRIEDVKQILDSLEIEKAFHNPFTEE.

The segment at methionine 1–glutamate 233 is alpha N-terminal domain (alpha-NTD). The alpha C-terminal domain (alpha-CTD) stretch occupies residues isoleucine 267–glutamate 337.

Belongs to the RNA polymerase alpha chain family. As to quaternary structure, in plastids the minimal PEP RNA polymerase catalytic core is composed of four subunits: alpha, beta, beta', and beta''. When a (nuclear-encoded) sigma factor is associated with the core the holoenzyme is formed, which can initiate transcription.

It is found in the plastid. It localises to the chloroplast. It catalyses the reaction RNA(n) + a ribonucleoside 5'-triphosphate = RNA(n+1) + diphosphate. DNA-dependent RNA polymerase catalyzes the transcription of DNA into RNA using the four ribonucleoside triphosphates as substrates. This is DNA-directed RNA polymerase subunit alpha from Eucalyptus globulus subsp. globulus (Tasmanian blue gum).